The following is a 527-amino-acid chain: Type-2 serine--tRNA ligase (527 aa).

Residue A317 coordinates L-serine. C319 lines the Zn(2+) pocket. R349 contacts L-serine. ATP contacts are provided by residues 349–351 (RWE) and 360–361 (RV). 366–368 (RIE) contacts L-serine. Zn(2+) contacts are provided by E368 and C478. R485 provides a ligand contact to ATP.

This sequence belongs to the class-II aminoacyl-tRNA synthetase family. Type-2 seryl-tRNA synthetase subfamily. Homodimer. It depends on Zn(2+) as a cofactor.

It is found in the cytoplasm. The catalysed reaction is tRNA(Ser) + L-serine + ATP = L-seryl-tRNA(Ser) + AMP + diphosphate + H(+). It catalyses the reaction tRNA(Sec) + L-serine + ATP = L-seryl-tRNA(Sec) + AMP + diphosphate + H(+). The protein operates within aminoacyl-tRNA biosynthesis; selenocysteinyl-tRNA(Sec) biosynthesis; L-seryl-tRNA(Sec) from L-serine and tRNA(Sec): step 1/1. Functionally, catalyzes the attachment of serine to tRNA(Ser). Is also able to aminoacylate tRNA(Sec) with serine, to form the misacylated tRNA L-seryl-tRNA(Sec), which will be further converted into selenocysteinyl-tRNA(Sec). The sequence is that of Type-2 serine--tRNA ligase from Methanopyrus kandleri (strain AV19 / DSM 6324 / JCM 9639 / NBRC 100938).